Reading from the N-terminus, the 461-residue chain is Ribitol-5-phosphate transferase FKTN (461 aa).

Residues 1–7 are Cytoplasmic-facing; the sequence is MSRINKN. The required and sufficient for interaction with POMGNT1 stretch occupies residues 6–27; the sequence is KNVVLALLTLTSSAFLLFQLYY. Residues 8–28 form a helical; Signal-anchor for type II membrane protein membrane-spanning segment; that stretch reads VVLALLTLTSSAFLLFQLYYY. Over 29-461 the chain is Lumenal; the sequence is KHYLSARNGP…SEWDEVIQLY (433 aa). N92 carries N-linked (GlcNAc...) asparagine glycosylation.

It belongs to the LicD transferase family. In terms of assembly, forms a complex composed of FKTN/fukutin, FKRP and RXYLT1/TMEM5. Interacts (via transmembrane domain) with POMGNT1; the interaction is direct and is required for normal POMGNT1 location in Golgi membranes. In terms of tissue distribution, expressed in the retina, with highest levels found in the inner segments of photoreceptors and the outer plexiform layer (at protein level). Expressed at lower levels in the inner and outer nuclear layers, the inner plexiform layers, and the ganglion cell layers of the retina (at protein level). Expressed in the heart, brain, spleen, lung, liver, skeletal muscle, kidney and testis.

The protein resides in the golgi apparatus membrane. It is found in the cytoplasm. Its subcellular location is the nucleus. It localises to the endoplasmic reticulum. The enzyme catalyses 3-O-[beta-D-GalNAc-(1-&gt;3)-beta-D-GlcNAc-(1-&gt;4)-(O-6-P-alpha-D-Man)]-Thr-[protein] + CDP-L-ribitol = 3-O-[Rib-ol-P-3-beta-D-GalNAc-(1-&gt;3)-beta-D-GlcNAc-(1-&gt;4)-(O-6-P-alpha-D-Man)]-Thr-[protein] + CMP + H(+). It functions in the pathway protein modification; protein glycosylation. Functionally, catalyzes the transfer of CDP-ribitol to the distal N-acetylgalactosamine of the phosphorylated O-mannosyl trisaccharide (N-acetylgalactosamine-beta-3-N-acetylglucosamine-beta-4-(phosphate-6-)mannose), a carbohydrate structure present in alpha-dystroglycan (DAG1). This constitutes the first step in the formation of the ribitol 5-phosphate tandem repeat which links the phosphorylated O-mannosyl trisaccharide to the ligand binding moiety composed of repeats of 3-xylosyl-alpha-1,3-glucuronic acid-beta-1. Required for normal location of POMGNT1 in Golgi membranes, and for normal POMGNT1 activity. May interact with and reinforce a large complex encompassing the outside and inside of muscle membranes. Could be involved in brain development. The sequence is that of Ribitol-5-phosphate transferase FKTN from Mus musculus (Mouse).